A 659-amino-acid chain; its full sequence is Sodium/nucleoside cotransporter 2 (659 aa).

Residues 1 to 10 show a composition bias toward basic and acidic residues; that stretch reads MAKSEGRKSA. The segment at 1-22 is disordered; that stretch reads MAKSEGRKSASQDTSENGMENP. At Ser-46 the chain carries Phosphoserine. A run of 14 helical transmembrane segments spans residues 81–101, 105–124, 149–167, 173–193, 201–221, 234–254, 261–281, 296–315, 337–356, 363–382, 424–444, 455–475, 530–550, and 568–588; these read ILLG…CILN, ALAL…CHFL, KRVF…LALD, EQLI…ACSK, RTVF…IRTE, IQIF…DTLV, QSLP…YLGL, TMGT…FVGM, VMTG…FISF, LISA…KLVY, VAAN…TLSW, TFQV…GVQW, ATFS…LGGL, and ALFT…ILYV.

Belongs to the concentrative nucleoside transporter (CNT) (TC 2.A.41) family. As to expression, expressed in liver (in bile canalicular membrane vesicles (CMV) but not in sinusoidal vesicles), jejunum, spleen and heart. Also expressed in brain and skeletal muscle. Not expressed in kidney, muscle and lung.

The protein localises to the membrane. The protein resides in the apicolateral cell membrane. The catalysed reaction is adenosine(out) + Na(+)(out) = adenosine(in) + Na(+)(in). The enzyme catalyses inosine(out) + Na(+)(out) = inosine(in) + Na(+)(in). It carries out the reaction guanosine(out) + Na(+)(out) = guanosine(in) + Na(+)(in). It catalyses the reaction uridine(out) + Na(+)(out) = uridine(in) + Na(+)(in). Its activity is regulated as follows. Inhibited by formycin B, partially inhibited by purine analog ara-A. In terms of biological role, sodium-dependent and purine-selective. Exhibits the transport characteristics of the nucleoside transport system cif or N1 subtype (N1/cif) (selective for purine nucleosides and uridine). Accepts purine, analogs of purine nucleosides and uridine, and exhibits high affinity for adenosine. May contribute to regulate the transport of organic compounds in testes across the blood-testis-barrier. The protein is Sodium/nucleoside cotransporter 2 (Slc28a2) of Rattus norvegicus (Rat).